Consider the following 312-residue polypeptide: Ribosomal RNA small subunit methyltransferase H (312 aa).

S-adenosyl-L-methionine is bound by residues G33–H35, D52, F81, D102, and Q109.

Belongs to the methyltransferase superfamily. RsmH family.

The protein localises to the cytoplasm. It carries out the reaction cytidine(1402) in 16S rRNA + S-adenosyl-L-methionine = N(4)-methylcytidine(1402) in 16S rRNA + S-adenosyl-L-homocysteine + H(+). In terms of biological role, specifically methylates the N4 position of cytidine in position 1402 (C1402) of 16S rRNA. The chain is Ribosomal RNA small subunit methyltransferase H from Leuconostoc mesenteroides subsp. mesenteroides (strain ATCC 8293 / DSM 20343 / BCRC 11652 / CCM 1803 / JCM 6124 / NCDO 523 / NBRC 100496 / NCIMB 8023 / NCTC 12954 / NRRL B-1118 / 37Y).